The primary structure comprises 83 residues: Small ribosomal subunit protein eS21 (83 aa).

This sequence belongs to the eukaryotic ribosomal protein eS21 family. Component of the 40S small ribosomal subunit.

The protein resides in the cytoplasm. The protein localises to the cytosol. Its subcellular location is the rough endoplasmic reticulum. The polypeptide is Small ribosomal subunit protein eS21 (RpS21) (Ixodes scapularis (Black-legged tick)).